A 127-amino-acid chain; its full sequence is Small ribosomal subunit protein eS8 (127 aa).

The tract at residues 1–25 (MTIFQGKSGKKPTGGNLKQAKKKRR) is disordered.

Belongs to the eukaryotic ribosomal protein eS8 family. As to quaternary structure, part of the 30S ribosomal subunit.

In Thermoplasma volcanium (strain ATCC 51530 / DSM 4299 / JCM 9571 / NBRC 15438 / GSS1), this protein is Small ribosomal subunit protein eS8.